The primary structure comprises 638 residues: Sodium- and chloride-dependent neutral and basic amino acid transporter B(0+) (638 aa).

Residues 1–44 (MDRLKCPNFFKCRQKEKVTASSENFHVGENDENQERGNWSKKSD) are Cytoplasmic-facing. A run of 3 helical transmembrane segments spans residues 45 to 65 (YLLSMVGYAVGLGNVWRFPYL), 72 to 92 (GAFLIPYAIMLALAGLPLFFL), and 110 to 130 (ILPLFQGVGITMVLISVFVAI). Residues 131 to 230 (YYNVIIAYSL…RSSGMDETGV (100 aa)) are Extracellular-facing. Asn-155, Asn-163, Asn-174, Asn-185, Asn-193, and Asn-198 each carry an N-linked (GlcNAc...) asparagine glycan. The next 2 helical transmembrane spans lie at 231-251 (VVWYLALCLLLAWLIVGAALF) and 257-277 (SGKVVYFTALFPYVVLLILLI). N-linked (GlcNAc...) asparagine glycosylation occurs at Asn-298. 7 consecutive transmembrane segments (helical) span residues 311–331 (AATQIFYSLSVAWGGLVALSS), 344–364 (IIVCLTNCLTSVFAGFAIFSI), 395–415 (LAQLPAGPFWSILFFFMLLTL), 453–473 (ILFLLGLLCVTQAGIYWVHLI), 476–496 (FCAGWGILIAAILEIAGIIWI), 524–544 (CWFVITPILLSAILVWSLVKF), and 559–579 (VALGWCMIIFCIIWIPIMAII). Topologically, residues 580 to 638 (KIVQAEGNILQRIISCCRPASNWGPYLEKHRGERYRDMAEPAKETDHEIPTISGSTKPE) are cytoplasmic. Residues 618–628 (AEPAKETDHEI) are compositionally biased toward basic and acidic residues. The tract at residues 618 to 638 (AEPAKETDHEIPTISGSTKPE) is disordered.

It belongs to the sodium:neurotransmitter symporter (SNF) (TC 2.A.22) family. SLC6A14 subfamily. In terms of tissue distribution, expressed in the distal region of the intestinal tract: cecum and colon.

It localises to the membrane. Its subcellular location is the apical cell membrane. It catalyses the reaction glycine(out) + chloride(out) + 2 Na(+)(out) = glycine(in) + chloride(in) + 2 Na(+)(in). It carries out the reaction L-leucine(out) + chloride(out) + 2 Na(+)(out) = L-leucine(in) + chloride(in) + 2 Na(+)(in). The enzyme catalyses L-glutamine(out) + chloride(out) + 2 Na(+)(out) = L-glutamine(in) + chloride(in) + 2 Na(+)(in). The catalysed reaction is L-arginine(out) + chloride(out) + 2 Na(+)(out) = L-arginine(in) + chloride(in) + 2 Na(+)(in). It catalyses the reaction (R)-carnitine(out) + chloride(out) + 2 Na(+)(out) = (R)-carnitine(in) + chloride(in) + 2 Na(+)(in). It carries out the reaction O-propanoyl-(R)-carnitine(out) + chloride(out) + 2 Na(+)(out) = O-propanoyl-(R)-carnitine(in) + chloride(in) + 2 Na(+)(in). The enzyme catalyses L-isoleucine(out) + chloride(out) + 2 Na(+)(out) = L-isoleucine(in) + chloride(in) + 2 Na(+)(in). The catalysed reaction is L-methionine(out) + chloride(out) + 2 Na(+)(out) = L-methionine(in) + chloride(in) + 2 Na(+)(in). It catalyses the reaction L-valine(out) + chloride(out) + 2 Na(+)(out) = L-valine(in) + chloride(in) + 2 Na(+)(in). It carries out the reaction L-alanine(out) + chloride(out) + 2 Na(+)(out) = L-alanine(in) + chloride(in) + 2 Na(+)(in). The enzyme catalyses L-serine(out) + chloride(out) + 2 Na(+)(out) = L-serine(in) + chloride(in) + 2 Na(+)(in). The catalysed reaction is L-cysteine(out) + chloride(out) + 2 Na(+)(out) = L-cysteine(in) + chloride(in) + 2 Na(+)(in). It catalyses the reaction L-asparagine(out) + chloride(out) + 2 Na(+)(out) = L-asparagine(in) + chloride(in) + 2 Na(+)(in). It carries out the reaction L-threonine(out) + chloride(out) + 2 Na(+)(out) = L-threonine(in) + chloride(in) + 2 Na(+)(in). The enzyme catalyses L-phenylalanine(out) + chloride(out) + 2 Na(+)(out) = L-phenylalanine(in) + chloride(in) + 2 Na(+)(in). The catalysed reaction is L-tryptophan(out) + chloride(out) + 2 Na(+)(out) = L-tryptophan(in) + chloride(in) + 2 Na(+)(in). It catalyses the reaction L-tyrosine(out) + chloride(out) + 2 Na(+)(out) = L-tyrosine(in) + chloride(in) + 2 Na(+)(in). It carries out the reaction L-histidine(out) + chloride(out) + 2 Na(+)(out) = L-histidine(in) + chloride(in) + 2 Na(+)(in). The enzyme catalyses L-lysine(out) + chloride(out) + 2 Na(+)(out) = L-lysine(in) + chloride(in) + 2 Na(+)(in). The catalysed reaction is O-butanoyl-(R)-carnitine(out) + chloride(out) + 2 Na(+)(out) = O-butanoyl-(R)-carnitine(in) + chloride(in) + 2 Na(+)(in). In terms of biological role, amino acid transporter that plays an important role in the absorption of amino acids in the intestinal tract. Mediates the uptake of a broad range of neutral and cationic amino acids (with the exception of proline) in a Na(+)/Cl(-)-dependent manner. Transports non-alpha-amino acids such as beta-alanine with low affinity, and has a higher affinity for dipolar and cationic amino acids such as leucine and lysine. Can also transport carnitine, butyrylcarnitine and propionylcarnitine coupled to the transmembrane gradients of Na(+) and Cl(-). This chain is Sodium- and chloride-dependent neutral and basic amino acid transporter B(0+), found in Mus musculus (Mouse).